A 313-amino-acid chain; its full sequence is Tyrosine recombinase XerC (313 aa).

The region spanning 1-85 (MNDQVEAFLR…AVKSFFAFLT (85 aa)) is the Core-binding (CB) domain. Residues 106–291 (DLPRALTPHQ…NHASSAQPVR (186 aa)) form the Tyr recombinase domain. Active-site residues include arginine 147, lysine 171, histidine 243, arginine 246, and histidine 269. Catalysis depends on tyrosine 278, which acts as the O-(3'-phospho-DNA)-tyrosine intermediate.

The protein belongs to the 'phage' integrase family. XerC subfamily. Forms a cyclic heterotetrameric complex composed of two molecules of XerC and two molecules of XerD.

Its subcellular location is the cytoplasm. In terms of biological role, site-specific tyrosine recombinase, which acts by catalyzing the cutting and rejoining of the recombining DNA molecules. The XerC-XerD complex is essential to convert dimers of the bacterial chromosome into monomers to permit their segregation at cell division. It also contributes to the segregational stability of plasmids. The protein is Tyrosine recombinase XerC of Roseiflexus sp. (strain RS-1).